The chain runs to 395 residues: Lipoyl synthase, mitochondrial (395 aa).

Residues 1 to 14 (MISLRSISRSPAVQ) constitute a mitochondrion transit peptide. 7 residues coordinate [4Fe-4S] cluster: C112, C117, C123, C142, C146, C149, and S357. A Radical SAM core domain is found at 127 to 346 (KKSEATATIM…RDTALQMGFL (220 aa)).

Belongs to the radical SAM superfamily. Lipoyl synthase family. [4Fe-4S] cluster is required as a cofactor.

It is found in the mitochondrion. The catalysed reaction is [[Fe-S] cluster scaffold protein carrying a second [4Fe-4S](2+) cluster] + N(6)-octanoyl-L-lysyl-[protein] + 2 oxidized [2Fe-2S]-[ferredoxin] + 2 S-adenosyl-L-methionine + 4 H(+) = [[Fe-S] cluster scaffold protein] + N(6)-[(R)-dihydrolipoyl]-L-lysyl-[protein] + 4 Fe(3+) + 2 hydrogen sulfide + 2 5'-deoxyadenosine + 2 L-methionine + 2 reduced [2Fe-2S]-[ferredoxin]. It functions in the pathway protein modification; protein lipoylation via endogenous pathway; protein N(6)-(lipoyl)lysine from octanoyl-[acyl-carrier-protein]: step 2/2. Catalyzes the radical-mediated insertion of two sulfur atoms into the C-6 and C-8 positions of the octanoyl moiety bound to the lipoyl domains of lipoate-dependent enzymes, thereby converting the octanoylated domains into lipoylated derivatives. The sequence is that of Lipoyl synthase, mitochondrial from Debaryomyces hansenii (strain ATCC 36239 / CBS 767 / BCRC 21394 / JCM 1990 / NBRC 0083 / IGC 2968) (Yeast).